The sequence spans 273 residues: Dermonecrotic toxin LhSicTox-alphaIA2av (273 aa).

His-5 is a catalytic residue. 2 residues coordinate Mg(2+): Glu-25 and Asp-27. Catalysis depends on His-41, which acts as the Nucleophile. Intrachain disulfides connect Cys-45–Cys-51 and Cys-47–Cys-190. Residue Asp-85 participates in Mg(2+) binding.

Belongs to the arthropod phospholipase D family. Class II subfamily. Mg(2+) serves as cofactor. In terms of tissue distribution, expressed by the venom gland.

It localises to the secreted. It carries out the reaction an N-(acyl)-sphingosylphosphocholine = an N-(acyl)-sphingosyl-1,3-cyclic phosphate + choline. It catalyses the reaction an N-(acyl)-sphingosylphosphoethanolamine = an N-(acyl)-sphingosyl-1,3-cyclic phosphate + ethanolamine. The enzyme catalyses a 1-acyl-sn-glycero-3-phosphocholine = a 1-acyl-sn-glycero-2,3-cyclic phosphate + choline. The catalysed reaction is a 1-acyl-sn-glycero-3-phosphoethanolamine = a 1-acyl-sn-glycero-2,3-cyclic phosphate + ethanolamine. Its function is as follows. Dermonecrotic toxins cleave the phosphodiester linkage between the phosphate and headgroup of certain phospholipids (sphingolipid and lysolipid substrates), forming an alcohol (often choline) and a cyclic phosphate. This toxin acts on sphingomyelin (SM). It may also act on ceramide phosphoethanolamine (CPE), lysophosphatidylcholine (LPC) and lysophosphatidylethanolamine (LPE), but not on lysophosphatidylserine (LPS), and lysophosphatidylglycerol (LPG). It acts by transphosphatidylation, releasing exclusively cyclic phosphate products as second products. Induces dermonecrosis, hemolysis, increased vascular permeability, edema, inflammatory response, and platelet aggregation. This Loxosceles hirsuta (Recluse spider) protein is Dermonecrotic toxin LhSicTox-alphaIA2av.